A 51-amino-acid polypeptide reads, in one-letter code: Insulin (51 aa).

3 disulfides stabilise this stretch: Cys7–Cys37, Cys19–Cys50, and Cys36–Cys41.

This sequence belongs to the insulin family. Heterodimer of a B chain and an A chain linked by two disulfide bonds.

The protein localises to the secreted. Functionally, insulin decreases blood glucose concentration. It increases cell permeability to monosaccharides, amino acids and fatty acids. It accelerates glycolysis, the pentose phosphate cycle, and glycogen synthesis in liver. This is Insulin (INS) from Anser anser anser (Western greylag goose).